The sequence spans 744 residues: Protein zyg-11 homolog B (744 aa).

3 LRR repeats span residues 185-208 (LPRLESLDISNTSITDITALLACK), 216-236 (MHHLKCLKMTTTQILDVVREL), and 237-261 (KHLNHLDISDDKQFTSDIALRLLEQ).

This sequence belongs to the zyg-11 family. As to quaternary structure, (Microbial infection) Interacts with SARS-COV-2 protein ORF10. Interacts with ELOC/Elongin C. Part of an E3 ubiquitin ligase complex including ZYG11B, CUL2 and Elongin BC. In terms of processing, (Microbial infection) Ubiquitinated; leading to proteasomal degradation in the presence of herpes simplex virus 1/HHV-1.

Its subcellular location is the cytoplasm. Functionally, serves as substrate adapter subunit in the E3 ubiquitin ligase complex ZYG11B-CUL2-Elongin BC. Acts to target substrates bearing N-terminal degrons for proteasomal degradation with the first four residues of substrates being the key recognition elements. Prefers Nt-Gly but also has the capacity to recognize Nt-Ser, -Ala and -Cys. Involved in the clearance of proteolytic fragments generated by caspase cleavage during apoptosis since N-terminal glycine degrons are strongly enriched at caspase cleavage sites. Also important in the quality control of protein N-myristoylation in which N-terminal glycine degrons are conditionally exposed after a failure of N-myristoylation. In addition, plays a role in the amplification of cGAS to enhance innate immune response. Mechanistically, strengthens the processes of cGAS binding with dsDNA and assembling oligomers and also accelerates and stabilizes cGAS-DNA condensation, thereby enhancing production of antiviral IFNs and inflammatory cytokines. This chain is Protein zyg-11 homolog B, found in Homo sapiens (Human).